The chain runs to 205 residues: Small ribosomal subunit protein uS4 (205 aa).

Basic and acidic residues predominate over residues 1–16 (MSKRESSKYKIDRRMG). Positions 1–46 (MSKRESSKYKIDRRMGENIWGRPKSPVNRREYGPGQHGQRRKSKLS) are disordered. The region spanning 94–157 (SRLDAIVYRA…KQLVSVLESV (64 aa)) is the S4 RNA-binding domain.

This sequence belongs to the universal ribosomal protein uS4 family. As to quaternary structure, part of the 30S ribosomal subunit. Contacts protein S5. The interaction surface between S4 and S5 is involved in control of translational fidelity.

In terms of biological role, one of the primary rRNA binding proteins, it binds directly to 16S rRNA where it nucleates assembly of the body of the 30S subunit. With S5 and S12 plays an important role in translational accuracy. The polypeptide is Small ribosomal subunit protein uS4 (Sinorhizobium fredii (strain NBRC 101917 / NGR234)).